A 94-amino-acid polypeptide reads, in one-letter code: Cell division topological specificity factor (94 aa).

The protein belongs to the MinE family.

Prevents the cell division inhibition by proteins MinC and MinD at internal division sites while permitting inhibition at polar sites. This ensures cell division at the proper site by restricting the formation of a division septum at the midpoint of the long axis of the cell. This chain is Cell division topological specificity factor, found in Alkaliphilus metalliredigens (strain QYMF).